Consider the following 349-residue polypeptide: Thylakoid lumenal 29 kDa protein, chloroplastic (349 aa).

A Phosphoserine modification is found at Ser155.

It belongs to the peroxidase family.

The protein resides in the plastid. The protein localises to the chloroplast thylakoid lumen. This is Thylakoid lumenal 29 kDa protein, chloroplastic (TL29) from Arabidopsis thaliana (Mouse-ear cress).